We begin with the raw amino-acid sequence, 310 residues long: Protein RL1 (310 aa).

Over residues 1–12 the composition is skewed to polar residues; the sequence is MPATDTNSTHTT. The disordered stretch occupies residues 1–44; that stretch reads MPATDTNSTHTTPLHPEDQHTLPLHHSTTQPHVQTSDKHADKQH. Residues 35–44 show a composition bias toward basic and acidic residues; it reads TSDKHADKQH. The interval 153–159 is involved in the interaction with host DDB1; sequence LLLARQR. The tract at residues 205–252 is disordered; that stretch reads ERPSAGEAQARGLLPRIRITPISTSPRPKPPQPTTSTASHPHATARPD. The segment covering 238 to 248 has biased composition (low complexity); the sequence is TTSTASHPHAT.

It belongs to the HHV-5 HKLF1 family. As to quaternary structure, interacts with host adaptor protein DDB1; this interaction allows RL1 to recruit the cullin4-RING E3 ubiquitin ligase (CRL4) complex and promote SLN11 degradation.

Degrades the host antiviral factor SLFN11 via the cullin4-RING E3 ubiquitin ligase (CRL4) complex. In Human cytomegalovirus (strain Merlin) (HHV-5), this protein is Protein RL1 (RL1).